A 365-amino-acid polypeptide reads, in one-letter code: Outer membrane protein assembly factor BamC (365 aa).

Residues 1 to 16 form the signal peptide; it reads MLKKVTPLFLVAAVAA. The N-palmitoyl cysteine moiety is linked to residue cysteine 17. Cysteine 17 carries S-diacylglycerol cysteine lipidation.

The protein belongs to the BamC family. In terms of assembly, part of the Bam complex.

The protein localises to the cell outer membrane. Functionally, part of the outer membrane protein assembly complex, which is involved in assembly and insertion of beta-barrel proteins into the outer membrane. The chain is Outer membrane protein assembly factor BamC from Shewanella oneidensis (strain ATCC 700550 / JCM 31522 / CIP 106686 / LMG 19005 / NCIMB 14063 / MR-1).